A 141-amino-acid polypeptide reads, in one-letter code: Hemoglobin subunit alpha-D (141 aa).

One can recognise a Globin domain in the interval 1 to 141; that stretch reads MLTAEDKKLI…VAAVLAEKYR (141 aa). Heme b-binding residues include H58 and H87.

In terms of assembly, heterotetramer of two alpha-D chains and two beta chains. Red blood cells.

Functionally, involved in oxygen transport from the lung to the various peripheral tissues. The chain is Hemoglobin subunit alpha-D (HBAD) from Aythya fuligula (Tufted duck).